The chain runs to 436 residues: UPF0597 protein YhaM (436 aa).

This sequence belongs to the UPF0597 family.

The chain is UPF0597 protein YhaM from Salmonella typhi.